Reading from the N-terminus, the 106-residue chain is MYAIVENGGKQYKVEVGHLLHTEKMNGVAQGDKVVLDKVVLVKTDDGKVLVGKPYLTNVTITGIVVEHARARKILVGQFIPRKGHKTIKGHRQWYTTIKIENIEIK.

It belongs to the bacterial ribosomal protein bL21 family. Part of the 50S ribosomal subunit. Contacts protein L20.

In terms of biological role, this protein binds to 23S rRNA in the presence of protein L20. The sequence is that of Large ribosomal subunit protein bL21 from Fervidobacterium nodosum (strain ATCC 35602 / DSM 5306 / Rt17-B1).